The chain runs to 105 residues: MAEWNGEYVSPYAEHGKKSEQVKKITVSIPLKVLRILTDERTRRQVNNLRHATNSELLCEAFLHAFTGQPLPDDADLRKERNDEIPEEAKKIMRELGIDPDTWEY.

It belongs to the MetJ family. Homodimer.

It is found in the cytoplasm. Functionally, this regulatory protein, when combined with SAM (S-adenosylmethionine) represses the expression of the methionine regulon and of enzymes involved in SAM synthesis. This chain is Met repressor, found in Photorhabdus laumondii subsp. laumondii (strain DSM 15139 / CIP 105565 / TT01) (Photorhabdus luminescens subsp. laumondii).